The chain runs to 669 residues: DNA ligase (669 aa).

Residues Asp-34–Asp-38, Ser-83–Leu-84, and Glu-117 contribute to the NAD(+) site. The active-site N6-AMP-lysine intermediate is Lys-119. NAD(+) contacts are provided by Arg-140, Glu-177, Lys-293, and Lys-317. Residues Cys-411, Cys-414, Cys-429, and Cys-434 each coordinate Zn(2+). A BRCT domain is found at Arg-591–Gly-669.

This sequence belongs to the NAD-dependent DNA ligase family. LigA subfamily. The cofactor is Mg(2+). Mn(2+) is required as a cofactor.

The enzyme catalyses NAD(+) + (deoxyribonucleotide)n-3'-hydroxyl + 5'-phospho-(deoxyribonucleotide)m = (deoxyribonucleotide)n+m + AMP + beta-nicotinamide D-nucleotide.. Functionally, DNA ligase that catalyzes the formation of phosphodiester linkages between 5'-phosphoryl and 3'-hydroxyl groups in double-stranded DNA using NAD as a coenzyme and as the energy source for the reaction. It is essential for DNA replication and repair of damaged DNA. In Geotalea daltonii (strain DSM 22248 / JCM 15807 / FRC-32) (Geobacter daltonii), this protein is DNA ligase.